Here is a 253-residue protein sequence, read N- to C-terminus: Chitooligosaccharide deacetylase (253 aa).

Positions 61 and 126 each coordinate Mg(2+).

This sequence belongs to the YdjC deacetylase family. ChbG subfamily. In terms of assembly, homodimer. Mg(2+) is required as a cofactor.

It localises to the cytoplasm. The enzyme catalyses N,N'-diacetylchitobiose + H2O = N-acetyl-beta-D-glucosaminyl-(1-&gt;4)-D-glucosamine + acetate. The catalysed reaction is diacetylchitobiose-6'-phosphate + H2O = N'-monoacetylchitobiose-6'-phosphate + acetate. Its pathway is glycan degradation; chitin degradation. In terms of biological role, involved in the degradation of chitin. ChbG is essential for growth on the acetylated chitooligosaccharides chitobiose and chitotriose but is dispensable for growth on cellobiose and chitosan dimer, the deacetylated form of chitobiose. Deacetylation of chitobiose-6-P and chitotriose-6-P is necessary for both the activation of the chb promoter by the regulatory protein ChbR and the hydrolysis of phosphorylated beta-glucosides by the phospho-beta-glucosidase ChbF. Catalyzes the removal of only one acetyl group from chitobiose-6-P to yield monoacetylchitobiose-6-P, the inducer of ChbR and the substrate of ChbF. The sequence is that of Chitooligosaccharide deacetylase from Serratia marcescens.